Consider the following 85-residue polypeptide: Large ribosomal subunit protein bL27 (85 aa).

The interval 1–21 (MAHKKAGGSSRNGRDSEAKRL) is disordered.

Belongs to the bacterial ribosomal protein bL27 family.

The sequence is that of Large ribosomal subunit protein bL27 from Aeromonas hydrophila subsp. hydrophila (strain ATCC 7966 / DSM 30187 / BCRC 13018 / CCUG 14551 / JCM 1027 / KCTC 2358 / NCIMB 9240 / NCTC 8049).